The chain runs to 358 residues: Stearoyl-CoA desaturase 2 (358 aa).

At 1 to 71 (MPAHILQEIS…EGPPPKLEYV (71 aa)) the chain is on the cytoplasmic side. The interval 14–43 (SATTTITAPPSGGQQNGGEKFEKNPHHWGA) is disordered. The span at 32-43 (EKFEKNPHHWGA) shows a compositional bias: basic and acidic residues. The helical transmembrane segment at 72–92 (WRNIVLMALLHIGALYGITLV) threads the bilayer. Residue asparagine 74 participates in substrate binding. Residues 93–96 (PSCK) are Lumenal-facing. Residues 97–117 (VYTCLFAYLYYVISALGITAG) traverse the membrane as a helical segment. Topologically, residues 118–216 (AHRLWSHRTY…EKLVMFQRRY (99 aa)) are cytoplasmic. 2 residues coordinate Fe cation: histidine 119 and histidine 124. The Histidine box-1 motif lies at 119-124 (HRLWSH). 3 residues coordinate substrate: asparagine 147, arginine 154, and aspartate 155. Residues histidine 156, histidine 159, and histidine 160 each contribute to the Fe cation site. The Histidine box-2 motif lies at 156-160 (HRAHH). Residues arginine 187 and lysine 188 each coordinate substrate. A helical transmembrane segment spans residues 217 to 236 (YKPGLLLMCFILPTLVPWYC). At 237–240 (WGET) the chain is on the lumenal side. Residues 241 to 262 (FVNSLCVSTFLRYAVVLNATWL) traverse the membrane as a helical segment. A substrate-binding site is contributed by tryptophan 261. The Cytoplasmic portion of the chain corresponds to 263–358 (VNSAAHLYGY…RTGEESCKSG (96 aa)). Residues histidine 268, histidine 297, histidine 300, and histidine 301 each contribute to the Fe cation site. Positions 297-301 (HNYHH) match the Histidine box-3 motif.

It belongs to the fatty acid desaturase type 1 family. Fe(2+) serves as cofactor. In terms of tissue distribution, detected in brain and adipose tissue, and at much lower levels in testis. Detected in liver when rats are kept on a fat-free diet, but not when their food contains unsaturated fatty acids.

The protein localises to the endoplasmic reticulum membrane. The protein resides in the microsome membrane. The enzyme catalyses octadecanoyl-CoA + 2 Fe(II)-[cytochrome b5] + O2 + 2 H(+) = (9Z)-octadecenoyl-CoA + 2 Fe(III)-[cytochrome b5] + 2 H2O. The catalysed reaction is hexadecanoyl-CoA + 2 Fe(II)-[cytochrome b5] + O2 + 2 H(+) = (9Z)-hexadecenoyl-CoA + 2 Fe(III)-[cytochrome b5] + 2 H2O. Its function is as follows. Stearoyl-CoA desaturase that utilizes O(2) and electrons from reduced cytochrome b5 to introduce the first double bond into saturated fatty acyl-CoA substrates. Catalyzes the insertion of a cis double bond at the delta-9 position into fatty acyl-CoA substrates including palmitoyl-CoA and stearoyl-CoA. Gives rise to a mixture of 16:1 and 18:1 unsaturated fatty acids. Contributes to the biosynthesis of membrane phospholipids, cholesterol esters and triglycerides, especially during embryonic development and in neonates. Important for normal permeability barrier function of the skin in neonates. This is Stearoyl-CoA desaturase 2 (Scd2) from Rattus norvegicus (Rat).